A 396-amino-acid chain; its full sequence is Tyrosine--tRNA ligase (396 aa).

The 'HIGH' region signature appears at 43–52 (PSSPDIHLGH). The 'KMSKS' region motif lies at 227–231 (KMSKS). Lysine 230 contacts ATP. The 59-residue stretch at 338-396 (ICVIDFIIKADLAKSKSEARRLLEQGGVEINSAKISDPGTTVKCGDIIKAGKRRYSKAV) folds into the S4 RNA-binding domain.

It belongs to the class-I aminoacyl-tRNA synthetase family. TyrS type 2 subfamily. In terms of assembly, homodimer.

Its subcellular location is the cytoplasm. The catalysed reaction is tRNA(Tyr) + L-tyrosine + ATP = L-tyrosyl-tRNA(Tyr) + AMP + diphosphate + H(+). Its function is as follows. Catalyzes the attachment of tyrosine to tRNA(Tyr) in a two-step reaction: tyrosine is first activated by ATP to form Tyr-AMP and then transferred to the acceptor end of tRNA(Tyr). The sequence is that of Tyrosine--tRNA ligase from Dehalococcoides mccartyi (strain ATCC BAA-2266 / KCTC 15142 / 195) (Dehalococcoides ethenogenes (strain 195)).